The primary structure comprises 626 residues: Chaperone protein HtpG (626 aa).

Residues 1 to 339 (MSQNQETRGF…SNDLPLNVSR (339 aa)) form an a; substrate-binding region. Residues 340-555 (EILQDNKITA…NDQMTTQMAK (216 aa)) are b. The segment at 556–626 (LFAAAGQPVP…FIKRINKLLG (71 aa)) is c.

This sequence belongs to the heat shock protein 90 family. As to quaternary structure, homodimer.

It localises to the cytoplasm. Molecular chaperone. Has ATPase activity. The chain is Chaperone protein HtpG from Haemophilus influenzae (strain ATCC 51907 / DSM 11121 / KW20 / Rd).